We begin with the raw amino-acid sequence, 554 residues long: Bifunctional epoxide hydrolase 2 (554 aa).

Positions methionine 1–alanine 224 are phosphatase. Mg(2+)-binding residues include aspartate 9 and aspartate 11. Lysine 55 bears the N6-succinyllysine mark. Phosphate is bound at residue threonine 123–asparagine 124. Residue lysine 176 is modified to N6-acetyllysine; alternate. N6-succinyllysine; alternate is present on lysine 176. Residue aspartate 185 participates in Mg(2+) binding. Lysine 191 and lysine 215 each carry N6-acetyllysine. The interval asparagine 233 to isoleucine 554 is epoxide hydrolase. In terms of domain architecture, AB hydrolase-1 spans proline 257–proline 530. The active-site Nucleophile is the aspartate 333. Serine 368 bears the Phosphoserine mark. Residue lysine 371 is modified to N6-succinyllysine. Position 381 (tyrosine 381) interacts with substrate. Lysine 420 and lysine 454 each carry N6-succinyllysine. The active-site Proton donor is the tyrosine 465. Residue lysine 504 is modified to N6-succinyllysine. N6-acetyllysine; alternate is present on lysine 508. Lysine 508 is modified (N6-succinyllysine; alternate). Cysteine 521 is lipidated: S-(15-deoxy-Delta12,14-prostaglandin J2-9-yl)cysteine. The Proton acceptor role is filled by histidine 523. The Microbody targeting signal motif lies at serine 552–isoleucine 554. Lysine 553 carries the post-translational modification N6-succinyllysine.

The protein belongs to the AB hydrolase superfamily. Epoxide hydrolase family. In terms of assembly, homodimer. Mg(2+) serves as cofactor. Post-translationally, the N-terminus is blocked. In terms of processing, the covalent modification of cysteine by 15-deoxy-Delta12,14-prostaglandin-J2 is autocatalytic and reversible. It may occur as an alternative to other cysteine modifications, such as S-nitrosylation and S-palmitoylation. In terms of tissue distribution, detected in liver, intestine, ovary and kidney. Detected at low levels in heart and muscle.

Its subcellular location is the cytoplasm. It localises to the peroxisome. The catalysed reaction is an epoxide + H2O = an ethanediol. It catalyses the reaction (9S,10S)-10-hydroxy-9-(phosphooxy)octadecanoate + H2O = (9S,10S)-9,10-dihydroxyoctadecanoate + phosphate. It carries out the reaction 8-hydroxy-(11S,12S)-epoxy-(5Z,9E,14Z)-eicosatrienoate + H2O = (8,11R,12S)-trihydroxy-(5Z,9E,14Z)-eicosatrienoate. The enzyme catalyses 10-hydroxy-(11S,12S)-epoxy- (5Z,8Z,14Z)-eicosatrienoate + H2O = (10,11S,12R)-trihydroxy-(5Z,8Z,14Z)-eicosatrienoate. The catalysed reaction is (8S,9R)-epoxy-(5Z,11Z,14Z)-eicosatrienoate + H2O = (8S,9S)-dihydroxy-(5Z,11Z,14Z)-eicosatrienoate. It catalyses the reaction (11S,12R)-epoxy-(5Z,8Z,14Z)-eicosatrienoate + H2O = (11R,12R)-dihydroxy-(5Z,8Z,14Z)-eicosatrienoate. It carries out the reaction (11S,12R)-epoxy-(5Z,8Z,14Z)-eicosatrienoate + H2O = (11S,12S)-dihydroxy-(5Z,8Z,14Z)-eicosatrienoate. The enzyme catalyses (14S,15R)-epoxy-(5Z,8Z,11Z)-eicosatrienoate + H2O = (14R,15R)-dihydroxy-(5Z,8Z,11Z)-eicosatrienoate. The catalysed reaction is (14S,15R)-epoxy-(5Z,8Z,11Z)-eicosatrienoate + H2O = (14S,15S)-dihydroxy-(5Z,8Z,11Z)-eicosatrienoate. It catalyses the reaction (11R,12S)-epoxy-(5Z,8Z,14Z)-eicosatrienoate + H2O = (11S,12S)-dihydroxy-(5Z,8Z,14Z)-eicosatrienoate. It carries out the reaction (11R,12S)-epoxy-(5Z,8Z,14Z)-eicosatrienoate + H2O = (11R,12R)-dihydroxy-(5Z,8Z,14Z)-eicosatrienoate. The enzyme catalyses (8S,9R)-epoxy-(5Z,11Z,14Z)-eicosatrienoate + H2O = (8R,9R)-dihydroxy-(5Z,11Z,14Z)-eicosatrienoate. The catalysed reaction is 12-phosphooxy-(9Z)-octadecenoate + H2O = 12-hydroxy-(9Z)-octadecenoate + phosphate. It catalyses the reaction 12-phosphooxy-(9E)-octadecenoate + H2O = 12-hydroxy-(9E)-octadecenoate + phosphate. It carries out the reaction 12-(phosphooxy)octadecanoate + H2O = 12-hydroxyoctadecanoate + phosphate. The enzyme catalyses 8,9-epoxy-(5Z,11Z,14Z)-eicosatrienoate + H2O = 8,9-dihydroxy-(5Z,11Z,14Z)-eicosatrienoate. The catalysed reaction is 11,12-epoxy-(5Z,8Z,14Z)-eicosatrienoate + H2O = 11,12-dihydroxy-(5Z,8Z,14Z)-eicosatrienoate. It catalyses the reaction 14,15-epoxy-(5Z,8Z,11Z)-eicosatrienoate + H2O = 14,15-dihydroxy-(5Z,8Z,11Z)-eicosatrienoate. It carries out the reaction 9,10-epoxy-(12Z)-octadecenoate + H2O = 9,10-dihydroxy-(12Z)-octadecenoate. The enzyme catalyses 1-tetradecanoyl-sn-glycerol 3-phosphate + H2O = 1-tetradecanoyl-sn-glycerol + phosphate. The catalysed reaction is 1-octadecanoyl-sn-glycero-3-phosphate + H2O = 1-octadecanoyl-sn-glycerol + phosphate. It catalyses the reaction 1-(5Z,8Z,11Z,14Z-eicosatetraenoyl)-sn-glycero-3-phosphate + H2O = 1-(5Z,8Z,11Z,14Z-eicosatetraenoyl)-sn-glycerol + phosphate. It carries out the reaction 1-hexadecanoyl-sn-glycero-3-phosphate + H2O = 1-hexadecanoyl-sn-glycerol + phosphate. The enzyme catalyses 1-(9Z-octadecenoyl)-sn-glycero-3-phosphate + H2O = 1-(9Z-octadecenoyl)-sn-glycerol + phosphate. The catalysed reaction is (14R,15S)-epoxy-(5Z,8Z,11Z)-eicosatrienoate + H2O = (14R,15R)-dihydroxy-(5Z,8Z,11Z)-eicosatrienoate. Its activity is regulated as follows. Inhibited by 1-(1-acetylpiperidin-4-yl)-3-(4-(trifl uoromethoxy)phenyl)urea (TPAU), 1-cyclohexyl-3-dodecylurea (CDU), 12-(3-adamantan-1-yl-ureido)-dodecanoic acid (AUDA), 1-((3S, 5S, 7S)-adamantan-1-yl)-3-(5-(2-(2-ethoxyethoxy) ethoxy)pentyl)urea (AEPU), N-adamantyl-N[']-cyclohexyl urea (ACU), 4-(((1S, 4S)-4-(3-((3S, 5S, 7S)-adamantan-1-yl) ureido)cyclohexyl)oxy)benzoic acid (c-AUCB), 4-(((1R, 4R)-4-(3-((3S, 5S, 7S)-adamantan-1-yl)ureido)cyclohexyl)oxy)benzoic acid (t-AUCB), 4-(((1R, 4R)-4-(3-(4(trifluoromethoxy)phenyl)ureido)cyclohexyl)oxy)benzoic acid (t-TAUCB) and to a lesser extent by 8-(3-((3S, 5S, 7S)-adamantan-1-yl)ureido) octanoic acid (AUOA). Phosphatase activity is inhibited by dodecyl-phosphate, phospholipids such as phospho-lysophosphatidic acids and fatty acids such as palmitic acid and lauric acid. Its function is as follows. Bifunctional enzyme. The C-terminal domain has epoxide hydrolase activity and acts on epoxides (alkene oxides, oxiranes) and arene oxides. Plays a role in xenobiotic metabolism by degrading potentially toxic epoxides. Also determines steady-state levels of physiological mediators. Bifunctional enzyme. The N-terminal domain has lipid phosphatase activity, with the highest activity towards threo-9,10-phosphonooxy-hydroxy-octadecanoic acid, followed by erythro-9,10-phosphonooxy-hydroxy-octadecanoic acid, 12-phosphonooxy-octadec-9Z-enoic acid and 12-phosphonooxy-octadec-9E-enoic acid. Has phosphatase activity toward lyso-glycerophospholipids with also some lower activity toward lysolipids of sphingolipid and isoprenoid phosphates. This Mus musculus (Mouse) protein is Bifunctional epoxide hydrolase 2.